The primary structure comprises 485 residues: MTTLMVQGTTSDAGKSTLVTALCRWLARQGVAVVPFKPQNMALNSAVTADGGEIGRAQAVQAQAANLAPHTDMNPVLLKPNSDIGAQVIVHGRAVTSMDAAAYHDYKRVALQAVLDSHRRLSAAYRVVMVEGAGSPAEINLRAGDIANMGFAEAVDCPVILIADIDKGGVFAHLVGTLALLSESEQARVQGFVINRFRGDIALLQPGLDWLEQRTGKPVLGVLPYLMDLHLEAEDAIDVRQAGKSAEVLKVVVPVLPRISNHTDFDPLRLHPQVDLQFVGPGQPVPSADLIILPGSKSVRADLAWLRANGWEAAIQKHLRYGGKLLGICGGLQMLGTRIADPLGLEGPAGESAGLGLLDFATVLEADKQLRNVQGRLLPEAVPVTGYEIHAGVSTGSALARPAVQLDDGRSDGAISADGQILGTYLHGLFESPDACAALLRWAGLEAVQQVDYHALRERDIERLADLVETHLDTAKLRRFCGLGG.

The region spanning 248–435 (VLKVVVPVLP…LHGLFESPDA (188 aa)) is the GATase cobBQ-type domain. The active-site Nucleophile is the cysteine 329. Histidine 427 is an active-site residue.

This sequence belongs to the CobB/CobQ family. CobQ subfamily.

It participates in cofactor biosynthesis; adenosylcobalamin biosynthesis. Catalyzes amidations at positions B, D, E, and G on adenosylcobyrinic A,C-diamide. NH(2) groups are provided by glutamine, and one molecule of ATP is hydrogenolyzed for each amidation. The protein is Cobyric acid synthase of Stutzerimonas stutzeri (strain A1501) (Pseudomonas stutzeri).